We begin with the raw amino-acid sequence, 300 residues long: Protein N-terminal and lysine N-methyltransferase EFM7 (300 aa).

S-adenosyl-L-methionine-binding positions include Trp75, 101 to 103 (GAG), Asp123, Trp156, and Ser179.

The protein belongs to the class I-like SAM-binding methyltransferase superfamily. EFM7 family.

It is found in the cytoplasm. In terms of biological role, S-adenosyl-L-methionine-dependent protein methyltransferase that trimethylates the N-terminal glycine 'Gly-2' of elongation factor 1-alpha, before also catalyzing the mono- and dimethylation of 'Lys-3'. The protein is Protein N-terminal and lysine N-methyltransferase EFM7 of Cryptococcus neoformans var. neoformans serotype D (strain JEC21 / ATCC MYA-565) (Filobasidiella neoformans).